The sequence spans 426 residues: Glutamate-1-semialdehyde 2,1-aminomutase (426 aa).

Lys-266 is modified (N6-(pyridoxal phosphate)lysine).

It belongs to the class-III pyridoxal-phosphate-dependent aminotransferase family. HemL subfamily. Requires pyridoxal 5'-phosphate as cofactor.

It is found in the cytoplasm. The catalysed reaction is (S)-4-amino-5-oxopentanoate = 5-aminolevulinate. It participates in porphyrin-containing compound metabolism; protoporphyrin-IX biosynthesis; 5-aminolevulinate from L-glutamyl-tRNA(Glu): step 2/2. The polypeptide is Glutamate-1-semialdehyde 2,1-aminomutase (hemL) (Methanocaldococcus jannaschii (strain ATCC 43067 / DSM 2661 / JAL-1 / JCM 10045 / NBRC 100440) (Methanococcus jannaschii)).